A 219-amino-acid polypeptide reads, in one-letter code: Elongation factor Ts (219 aa).

The segment at 82-85 (TDFV) is involved in Mg(2+) ion dislocation from EF-Tu.

This sequence belongs to the EF-Ts family.

The protein resides in the cytoplasm. Associates with the EF-Tu.GDP complex and induces the exchange of GDP to GTP. It remains bound to the aminoacyl-tRNA.EF-Tu.GTP complex up to the GTP hydrolysis stage on the ribosome. The protein is Elongation factor Ts of Anaeromyxobacter dehalogenans (strain 2CP-C).